Consider the following 396-residue polypeptide: MTTPFKRIHLIVMDSVGIGEGPDAAAFNDEGSHTLKHTLEGFEQDLPNLQRLGLGNIAPLPVVEEVEQPEAFYTKLSEASVGKDTMTGHWEIMGLNIMQPFKVYPDGFPDELVKEIEDMTGRKVVANRPASGTQIIDEWGEHQMKTGDLIVYTSADPVLQIAAHEDVIPLEELYDICEKVRELTKDPKYLIGRIIARPYVGEPGNFTRTSNRHDYALKPFGRTVMNELKDNNYDVIAIGKINDIYDGEGVTEAIRTKNNMDGMDKLIDVVKHDFTGISFLNLVDFDALYGHRRDKEGYAQAIKDFDERLPELIDNLQEDDLVIITADHGNDPIAPGTDHTREYIPVLLYSPKLKDKAHELSGDTTFSSIGATIADNFDVPLPEYGRSFLSEMNVEK.

Residues Asp-14, Asp-286, His-291, Asp-327, His-328, and His-339 each contribute to the Mn(2+) site.

The protein belongs to the phosphopentomutase family. It depends on Mn(2+) as a cofactor.

The protein localises to the cytoplasm. It carries out the reaction 2-deoxy-alpha-D-ribose 1-phosphate = 2-deoxy-D-ribose 5-phosphate. It catalyses the reaction alpha-D-ribose 1-phosphate = D-ribose 5-phosphate. It participates in carbohydrate degradation; 2-deoxy-D-ribose 1-phosphate degradation; D-glyceraldehyde 3-phosphate and acetaldehyde from 2-deoxy-alpha-D-ribose 1-phosphate: step 1/2. In terms of biological role, isomerase that catalyzes the conversion of deoxy-ribose 1-phosphate (dRib-1-P) and ribose 1-phosphate (Rib-1-P) to deoxy-ribose 5-phosphate (dRib-5-P) and ribose 5-phosphate (Rib-5-P), respectively. This Staphylococcus carnosus (strain TM300) protein is Phosphopentomutase.